The sequence spans 525 residues: Probable histidine ammonia-lyase (525 aa).

The 5-imidazolinone (Ala-Gly) cross-link spans 145–147 (ASG). A 2,3-didehydroalanine (Ser) modification is found at Ser146.

This sequence belongs to the PAL/histidase family. Post-translationally, contains an active site 4-methylidene-imidazol-5-one (MIO), which is formed autocatalytically by cyclization and dehydration of residues Ala-Ser-Gly.

The protein localises to the cytoplasm. It carries out the reaction L-histidine = trans-urocanate + NH4(+). It participates in amino-acid degradation; L-histidine degradation into L-glutamate; N-formimidoyl-L-glutamate from L-histidine: step 1/3. The chain is Probable histidine ammonia-lyase from Halobacterium salinarum (strain ATCC 29341 / DSM 671 / R1).